The chain runs to 77 residues: U8-lycotoxin-Ls1g (77 aa).

The signal sequence occupies residues 1-20; the sequence is MKLIIFTGLVLFAIVSLIEV. Positions 21 to 26 are excised as a propeptide; the sequence is QADNER.

The protein belongs to the neurotoxin 19 (CSTX) family. 08 (U8-Lctx) subfamily. In terms of processing, contains 4 disulfide bonds. As to expression, expressed by the venom gland.

The protein localises to the secreted. This chain is U8-lycotoxin-Ls1g, found in Lycosa singoriensis (Wolf spider).